A 143-amino-acid polypeptide reads, in one-letter code: Peptide methionine sulfoxide reductase MsrB (143 aa).

A MsrB domain is found at 5-127 (KEKRLKELNR…NSAALKFIPK (123 aa)). Catalysis depends on C116, which acts as the Nucleophile.

The protein belongs to the MsrB Met sulfoxide reductase family.

The catalysed reaction is L-methionyl-[protein] + [thioredoxin]-disulfide + H2O = L-methionyl-(R)-S-oxide-[protein] + [thioredoxin]-dithiol. The polypeptide is Peptide methionine sulfoxide reductase MsrB (Bacillus pumilus (strain SAFR-032)).